Reading from the N-terminus, the 275-residue chain is 3-methyl-2-oxobutanoate hydroxymethyltransferase (275 aa).

Aspartate 49 and aspartate 88 together coordinate Mg(2+). Residues 49–50 (DS), aspartate 88, and lysine 118 contribute to the 3-methyl-2-oxobutanoate site. Glutamate 120 lines the Mg(2+) pocket. Glutamate 187 functions as the Proton acceptor in the catalytic mechanism.

It belongs to the PanB family. In terms of assembly, homodecamer; pentamer of dimers. Requires Mg(2+) as cofactor.

The protein resides in the cytoplasm. The enzyme catalyses 3-methyl-2-oxobutanoate + (6R)-5,10-methylene-5,6,7,8-tetrahydrofolate + H2O = 2-dehydropantoate + (6S)-5,6,7,8-tetrahydrofolate. It functions in the pathway cofactor biosynthesis; (R)-pantothenate biosynthesis; (R)-pantoate from 3-methyl-2-oxobutanoate: step 1/2. Functionally, catalyzes the reversible reaction in which hydroxymethyl group from 5,10-methylenetetrahydrofolate is transferred onto alpha-ketoisovalerate to form ketopantoate. The sequence is that of 3-methyl-2-oxobutanoate hydroxymethyltransferase from Bartonella quintana (strain Toulouse) (Rochalimaea quintana).